The following is a 198-amino-acid chain: Recombination protein RecR (198 aa).

Residues 57–72 form a C4-type zinc finger; it reads CSICGNLTESDPCAIC. The 96-residue stretch at 80–175 folds into the Toprim domain; that stretch reads TTILVVEESK…KVTRLAHGLA (96 aa).

This sequence belongs to the RecR family.

Its function is as follows. May play a role in DNA repair. It seems to be involved in an RecBC-independent recombinational process of DNA repair. It may act with RecF and RecO. This Lactococcus lactis subsp. cremoris (strain SK11) protein is Recombination protein RecR.